An 864-amino-acid polypeptide reads, in one-letter code: Disintegrin and metalloproteinase domain-containing protein 15 (864 aa).

The signal sequence occupies residues 1-17 (MRLALLWALGLLGAGSP). A disordered region spans residues 17–49 (PRPSPPLPNIGGTEEEQQASPERTQSRSLENQV). The propeptide occupies 18–208 (RPSPPLPNIG…EQHHLRRLKR (191 aa)). The span at 34 to 49 (QASPERTQSRSLENQV) shows a compositional bias: polar residues. N57 carries an N-linked (GlcNAc...) asparagine glycan. A Cysteine switch motif is present at residues 178–185 (HTCAPSWH). Position 180 (C180) interacts with Zn(2+). The Extracellular portion of the chain corresponds to 209-698 (DVVTETKIVE…QLRATSSLTT (490 aa)). A Peptidase M12B domain is found at 215-416 (KIVELVIVAD…GMGSCLFEWP (202 aa)). The N-linked (GlcNAc...) asparagine glycan is linked to N239. 4 disulfides stabilise this stretch: C325-C411, C367-C395, C369-C378, and C482-C502. H350 contributes to the Zn(2+) binding site. E351 is an active-site residue. Zn(2+)-binding residues include H354 and H360. 2 N-linked (GlcNAc...) asparagine glycosylation sites follow: N391 and N394. In terms of domain architecture, Disintegrin spans 423-510 (SSLCGNMFVD…QCPPDIRLGD (88 aa)). N608 and N613 each carry an N-linked (GlcNAc...) asparagine glycan. Cystine bridges form between C659-C669, C663-C675, and C677-C686. An EGF-like domain is found at 659–687 (CRSKCHGHGVCDSSRHCHCDEGWAPPDCM). Residues 699–719 (GLLLSLLLLLVLVLLGASYWY) form a helical membrane-spanning segment. Phosphotyrosine; by HCK and LCK is present on residues Y717 and Y737. At 720-864 (RARLHQRLCQ…PPPAASSLYL (145 aa)) the chain is on the cytoplasmic side. Positions 738-864 (RAAQSGPPER…PPPAASSLYL (127 aa)) are disordered. Residues 753–765 (RAQQMPGTKQANV) show a composition bias toward polar residues. Pro residues-rich tracts occupy residues 768 to 780 (PVPP…PNPV) and 810 to 825 (PQGP…PLPA). The short motif at 816-822 (PPPPRKP) is the SH3-binding element. Over residues 826 to 850 (NPQGRPPLGDLPGPGDGSLQLVVPS) the composition is skewed to low complexity. Positions 851-857 (RPAPPPP) match the SH3-binding motif.

Interacts with ITAGV-ITGB3 (vitronectin receptor). Interacts with SH3GL2 and SNX9; this interaction occurs preferentially with ADAM15 precursor, rather than the processed form, suggesting it occurs in a secretory pathway compartment prior to the medial Golgi. Interacts with ITAG9-ITGB1. Interacts specifically with Src family protein-tyrosine kinases (PTKs). Interacts with SH3PXD2A. Interacts with ITAGV-ITGB1. Interacts with GRB2, HCK, ITSN1, ITSN2, LYN, MAPK1, MAPK3, NCF1, NCK1, nephrocystin, PTK6, SNX33, LCK and SRC. Zn(2+) serves as cofactor. Post-translationally, the precursor is cleaved by a furin endopeptidase. In terms of processing, phosphorylation increases association with PTKs. In terms of tissue distribution, predominantly expressed in brain, spinal cord, sciatic nerve and lung. Expressed at lower levels in all other tissues. In the peripheral nervous system, expressed predominantly by Schwann cells. In the central nervous system, preferentially expressed by neuronal cells.

It is found in the endomembrane system. The protein localises to the cell junction. The protein resides in the adherens junction. It localises to the cell projection. Its subcellular location is the cilium. It is found in the flagellum. The protein localises to the cytoplasmic vesicle. The protein resides in the secretory vesicle. It localises to the acrosome. Functionally, active metalloproteinase with gelatinolytic and collagenolytic activity. Plays a role in the wound healing process. Mediates both heterotypic intraepithelial cell/T-cell interactions and homotypic T-cell aggregation. Inhibits beta-1 integrin-mediated cell adhesion and migration of airway smooth muscle cells. Suppresses cell motility on or towards fibronectin possibly by driving alpha-v/beta-1 integrin (ITAGV-ITGB1) cell surface expression via ERK1/2 inactivation. Cleaves E-cadherin in response to growth factor deprivation. Plays a role in glomerular cell migration. Plays a role in pathological neovascularization. May play a role in cartilage remodeling. May be proteolytically processed, during sperm epididymal maturation and the acrosome reaction. May play a role in sperm-egg binding through its disintegrin domain. The protein is Disintegrin and metalloproteinase domain-containing protein 15 (Adam15) of Rattus norvegicus (Rat).